The sequence spans 68 residues: uncharacterized protein (68 aa).

Positions 1-20 (MYKQKKKNHPFQCKKKKKKK) are disordered. Residues 27 to 44 (IKLLFNYFLFFNFIITTF) traverse the membrane as a helical segment.

The protein localises to the membrane. This is an uncharacterized protein from Dictyostelium discoideum (Social amoeba).